We begin with the raw amino-acid sequence, 131 residues long: Protein DfrA (131 aa).

This sequence belongs to the RutC family.

The polypeptide is Protein DfrA (dfrA) (Myxococcus xanthus).